The primary structure comprises 170 residues: Co-chaperone protein HscB homolog (170 aa).

One can recognise a J domain in the interval 5 to 79 (DHFSLFGLPT…RARYLCEQAG (75 aa)).

This sequence belongs to the HscB family. Interacts with HscA and stimulates its ATPase activity.

Its function is as follows. Co-chaperone involved in the maturation of iron-sulfur cluster-containing proteins. Seems to help targeting proteins to be folded toward HscA. The protein is Co-chaperone protein HscB homolog of Bordetella bronchiseptica (strain ATCC BAA-588 / NCTC 13252 / RB50) (Alcaligenes bronchisepticus).